A 104-amino-acid polypeptide reads, in one-letter code: Cysteine-rich and transmembrane domain-containing protein 1 (104 aa).

Composition is skewed to pro residues over residues 1-25 (MNPE…PQQP) and 33-47 (GAPP…PPQG). The tract at residues 1 to 47 (MNPENPPPYPGPGPTAPYPPYPQQPMGPMGPMGAPPPQGYPYPPPQG) is disordered. A helical transmembrane segment spans residues 81 to 98 (LGPSTCLTACWTALCCCC).

Belongs to the CYSTM1 family.

It is found in the membrane. The sequence is that of Cysteine-rich and transmembrane domain-containing protein 1 (Cystm1) from Mus musculus (Mouse).